Here is a 474-residue protein sequence, read N- to C-terminus: MAQLEGYYFSAALSCTFLVSCLLFSAFSRALREPYMDEIFHLPQAQRYCEGRFSLSQWDPMITTLPGLYLVSVGVVKPASWLLGWSEHVICSIGVLRFVNLLFSVGNFYLLYLLFRKVQPRNKASSSIQRILSTLTLAVFPTLYFFNFLYYTEAGSVFFTLFAYLMCLYGNHRTSALLGFCGFMFRQTNIIWAAFCAGHLIAQKCSEAWKIELQKKKEERLAPTKGPLSELRRVLQFLLVYAMSLKNLRMLFLLTWPYVLLLLAFFAFVVVNGGIVVGDRSSHEACLHFPQLFYFFSFTAFFSFPHLLSLTKVKTFLSLVWKRRVQFSVVTLVSILLVWKFTYVHKYLLADNRHYTFYVWKRVFQRHEVVKYLLVPAYIFAGWAIADSLKAKSIFWNLMFFVCLVASTVPQKLLEFRYFILPYIIYRLNIPLPPISRLVCELGCYTVVNFVTFYIFLNKTFQWPNSQDIQRFMW.

Residues 1–6 (MAQLEG) are Cytoplasmic-facing. Residues 7–27 (YYFSAALSCTFLVSCLLFSAF) traverse the membrane as a helical segment. Residues 28-64 (SRALREPYMDEIFHLPQAQRYCEGRFSLSQWDPMITT) are Extracellular-facing. The helical transmembrane segment at 65–85 (LPGLYLVSVGVVKPASWLLGW) threads the bilayer. Over 86–97 (SEHVICSIGVLR) the chain is Cytoplasmic. A helical membrane pass occupies residues 98–118 (FVNLLFSVGNFYLLYLLFRKV). Residues 119–126 (QPRNKASS) are Extracellular-facing. The chain crosses the membrane as a helical span at residues 127-147 (SIQRILSTLTLAVFPTLYFFN). The Cytoplasmic portion of the chain corresponds to 148–150 (FLY). A helical transmembrane segment spans residues 151–171 (YTEAGSVFFTLFAYLMCLYGN). Over 172-175 (HRTS) the chain is Extracellular. The helical transmembrane segment at 176–196 (ALLGFCGFMFRQTNIIWAAFC) threads the bilayer. The Cytoplasmic portion of the chain corresponds to 197-256 (AGHLIAQKCSEAWKIELQKKKEERLAPTKGPLSELRRVLQFLLVYAMSLKNLRMLFLLTW). The helical transmembrane segment at 257 to 277 (PYVLLLLAFFAFVVVNGGIVV) threads the bilayer. Over 278–283 (GDRSSH) the chain is Extracellular. The helical transmembrane segment at 284–304 (EACLHFPQLFYFFSFTAFFSF) threads the bilayer. Topologically, residues 305–317 (PHLLSLTKVKTFL) are cytoplasmic. Residues 318–338 (SLVWKRRVQFSVVTLVSILLV) traverse the membrane as a helical segment. Residues 339–365 (WKFTYVHKYLLADNRHYTFYVWKRVFQ) are Extracellular-facing. Residues 366–386 (RHEVVKYLLVPAYIFAGWAIA) form a helical membrane-spanning segment. The Cytoplasmic segment spans residues 387–392 (DSLKAK). Residues 393-413 (SIFWNLMFFVCLVASTVPQKL) form a helical membrane-spanning segment. Residues 414–436 (LEFRYFILPYIIYRLNIPLPPIS) lie on the Extracellular side of the membrane. The chain crosses the membrane as a helical span at residues 437-457 (RLVCELGCYTVVNFVTFYIFL). At 458–473 (NKTFQWPNSQDIQRFM) the chain is on the cytoplasmic side.

This sequence belongs to the ALG10 glucosyltransferase family. In terms of assembly, interacts with KCNH1; may regulate KCNH1, possibly by regulating its N-glycosylation. Interacts with KCNH2; may reduce KCNH2 sensitivity to classic proarrhythmic drug blockade, possibly by regulating its N-glycosylation.

The protein resides in the endoplasmic reticulum membrane. The enzyme catalyses an alpha-D-Glc-(1-&gt;3)-alpha-D-Glc-(1-&gt;3)-alpha-D-Man-(1-&gt;2)-alpha-D-Man-(1-&gt;2)-alpha-D-Man-(1-&gt;3)-[alpha-D-Man-(1-&gt;2)-alpha-D-Man-(1-&gt;3)-[alpha-D-Man-(1-&gt;2)-alpha-D-Man-(1-&gt;6)]-alpha-D-Man-(1-&gt;6)]-beta-D-Man-(1-&gt;4)-beta-D-GlcNAc-(1-&gt;4)-alpha-D-GlcNAc-diphospho-di-trans,poly-cis-dolichol + a di-trans,poly-cis-dolichyl beta-D-glucosyl phosphate = a alpha-D-Glc-(1-&gt;2)-alpha-D-Glc-(1-&gt;3)-alpha-D-Glc-(1-&gt;3)-alpha-D-Man-(1-&gt;2)-alpha-D-Man-(1-&gt;2)-alpha-D-Man-(1-&gt;3)-[alpha-D-Man-(1-&gt;2)-alpha-D-Man-(1-&gt;3)-[alpha-D-Man-(1-&gt;2)-alpha-D-Man-(1-&gt;6)]-alpha-D-Man-(1-&gt;6)]-beta-D-Man-(1-&gt;4)-beta-D-GlcNAc-(1-&gt;4)-alpha-D-GlcNAc-diphospho-di-trans,poly-cis-dolichol + a di-trans,poly-cis-dolichyl phosphate + H(+). Its pathway is protein modification; protein glycosylation. In terms of biological role, dol-P-Glc:Glc(2)Man(9)GlcNAc(2)-PP-Dol alpha-1,2-glucosyltransferase that operates in the biosynthetic pathway of dolichol-linked oligosaccharides, the glycan precursors employed in protein asparagine (N)-glycosylation. The assembly of dolichol-linked oligosaccharides begins on the cytosolic side of the endoplasmic reticulum membrane and finishes in its lumen. The sequential addition of sugars to dolichol pyrophosphate produces dolichol-linked oligosaccharides containing fourteen sugars, including two GlcNAcs, nine mannoses and three glucoses. Once assembled, the oligosaccharide is transferred from the lipid to nascent proteins by oligosaccharyltransferases. In the lumen of the endoplasmic reticulum, adds the third and last glucose residue from dolichyl phosphate glucose (Dol-P-Glc) onto the lipid-linked oligosaccharide intermediate Glc(2)Man(9)GlcNAc(2)-PP-Dol to produce Glc(3)Man(9)GlcNAc(2)-PP-Dol. The chain is Dol-P-Glc:Glc(2)Man(9)GlcNAc(2)-PP-Dol alpha-1,2-glucosyltransferase from Mus musculus (Mouse).